Here is a 240-residue protein sequence, read N- to C-terminus: Manganese transport system ATP-binding protein MntB (240 aa).

The ABC transporter domain maps to 1–233; it reads MEIQGLTIAY…KIQFAYGDAP (233 aa). An ATP-binding site is contributed by 33–40; the sequence is GPNGAGKS.

The protein belongs to the ABC transporter superfamily.

The protein localises to the cell membrane. Functionally, this protein is probably a component of a manganese permease, a binding protein-dependent, ATP-driven transport system. Probably responsible for energy coupling to the transport system. In Listeria monocytogenes serovar 1/2a (strain ATCC BAA-679 / EGD-e), this protein is Manganese transport system ATP-binding protein MntB (mntB).